Reading from the N-terminus, the 130-residue chain is Small ribosomal subunit protein uS8 (130 aa).

It belongs to the universal ribosomal protein uS8 family. Part of the 30S ribosomal subunit.

One of the primary rRNA binding proteins, it binds directly to 16S rRNA central domain where it helps coordinate assembly of the platform of the 30S subunit. In Pyrobaculum calidifontis (strain DSM 21063 / JCM 11548 / VA1), this protein is Small ribosomal subunit protein uS8.